The chain runs to 238 residues: Ribonuclease PH (238 aa).

Residues Arg-86 and 124 to 126 (GTR) each bind phosphate.

This sequence belongs to the RNase PH family. As to quaternary structure, homohexameric ring arranged as a trimer of dimers.

It catalyses the reaction tRNA(n+1) + phosphate = tRNA(n) + a ribonucleoside 5'-diphosphate. In terms of biological role, phosphorolytic 3'-5' exoribonuclease that plays an important role in tRNA 3'-end maturation. Removes nucleotide residues following the 3'-CCA terminus of tRNAs; can also add nucleotides to the ends of RNA molecules by using nucleoside diphosphates as substrates, but this may not be physiologically important. Probably plays a role in initiation of 16S rRNA degradation (leading to ribosome degradation) during starvation. This Mesorhizobium japonicum (strain LMG 29417 / CECT 9101 / MAFF 303099) (Mesorhizobium loti (strain MAFF 303099)) protein is Ribonuclease PH.